Reading from the N-terminus, the 341-residue chain is Ribosomal RNA small subunit methyltransferase H (341 aa).

S-adenosyl-L-methionine-binding positions include 47-49 (GGY), Asp-64, Phe-91, Asp-109, and Gln-116.

This sequence belongs to the methyltransferase superfamily. RsmH family.

The protein localises to the cytoplasm. It carries out the reaction cytidine(1402) in 16S rRNA + S-adenosyl-L-methionine = N(4)-methylcytidine(1402) in 16S rRNA + S-adenosyl-L-homocysteine + H(+). Functionally, specifically methylates the N4 position of cytidine in position 1402 (C1402) of 16S rRNA. The chain is Ribosomal RNA small subunit methyltransferase H from Rhizobium rhizogenes (strain K84 / ATCC BAA-868) (Agrobacterium radiobacter).